Here is a 111-residue protein sequence, read N- to C-terminus: Shuttling pre-60S factor C23B6.02c (111 aa).

Basic residues-rich tracts occupy residues 1–12 (MAKKQSIRSRNF) and 59–73 (SKKKKNKKQTSKKAK). Disordered regions lie at residues 1 to 25 (MAKKQSIRSRNFRRSDPAYDLDSST) and 47 to 111 (ALRS…QGDE). Residues 83–111 (QAREERLDTKISKSLQKQEKLKARKQGDE) show a composition bias toward basic and acidic residues.

This sequence belongs to the ECM1 family. As to quaternary structure, associates with the pre-60S ribosomal particle and the nucleopore complex.

It is found in the nucleus. It localises to the nucleolus. The protein resides in the cytoplasm. Pre-ribosomal factor involved in 60S ribosomal protein subunit export from the nucleus. This Schizosaccharomyces pombe (strain 972 / ATCC 24843) (Fission yeast) protein is Shuttling pre-60S factor C23B6.02c.